Reading from the N-terminus, the 198-residue chain is Recombination protein RecR (198 aa).

The C4-type zinc-finger motif lies at Cys56–Cys71. The Toprim domain occupies Arg79–Pro174.

This sequence belongs to the RecR family.

May play a role in DNA repair. It seems to be involved in an RecBC-independent recombinational process of DNA repair. It may act with RecF and RecO. This Novosphingobium aromaticivorans (strain ATCC 700278 / DSM 12444 / CCUG 56034 / CIP 105152 / NBRC 16084 / F199) protein is Recombination protein RecR.